Here is a 491-residue protein sequence, read N- to C-terminus: Cytochrome P450 2H1 (491 aa).

Cys-436 is a heme binding site.

Belongs to the cytochrome P450 family. Heme serves as cofactor. In terms of tissue distribution, expressed in liver.

The protein localises to the endoplasmic reticulum membrane. Its subcellular location is the microsome membrane. The enzyme catalyses an organic molecule + reduced [NADPH--hemoprotein reductase] + O2 = an alcohol + oxidized [NADPH--hemoprotein reductase] + H2O + H(+). Its function is as follows. Cytochromes P450 are a group of heme-thiolate monooxygenases. In liver microsomes, this enzyme is involved in an NADPH-dependent electron transport pathway. It oxidizes a variety of structurally unrelated compounds, including steroids, fatty acids, and xenobiotics. The chain is Cytochrome P450 2H1 (CYP2H1) from Gallus gallus (Chicken).